The following is a 329-amino-acid chain: Probable aryl-alcohol dehydrogenase AAD4 (329 aa).

Tyrosine 30 acts as the Proton donor in catalysis. Histidine 105 provides a ligand contact to substrate. Position 190 to 200 (190 to 200) interacts with NADP(+); the sequence is DVMGGGRFQSK.

The protein belongs to the aldo/keto reductase family. Aldo/keto reductase 2 subfamily.

The chain is Probable aryl-alcohol dehydrogenase AAD4 (AAD4) from Saccharomyces cerevisiae (strain ATCC 204508 / S288c) (Baker's yeast).